A 405-amino-acid chain; its full sequence is POC1 centriolar protein homolog A (405 aa).

WD repeat units lie at residues 17–56, 59–98, 101–140, 143–182, 185–224, 227–266, and 269–308; these read GHRDAVTCVDFSLNTKHLASGSMDSTLMIWHMKPQSRAYR, GHKDAVTCVNFSPSGHLLASGSRDKTVRIWVPNVKGESTV, AHTATVRSVHFCSDGQSLVTASDDKTVKVWSTHRQRFLFS, QHINWVRCAKFSPDGRLIVSASDDKTVKLWDKTSRECIHS, EHGGFVTYVDFHPSGTCIAAAGMDNTVKVWDARTHRLLQH, LHSAAVNALSFHPSGNYLITASSDSTLKILDLMEGRLLYT, and GHQGPATTVAFSRTGEYFASGGSDEQVMVWKSNFDIVDYG. Residues 313-352 are disordered; that stretch reads RRPPPLTSSSGTLPKMDLPVPPGRDRSLESVQGEPQESIS. The span at 341–352 shows a compositional bias: polar residues; sequence ESVQGEPQESIS. The stretch at 367–395 forms a coiled coil; that stretch reads QLDILTQTVSILEQRLTLTEDRLKQCLEN.

The protein belongs to the WD repeat POC1 family. As to quaternary structure, interacts with POC1B. As to expression, widely expressed in embryonic and adult tissues.

The protein localises to the cytoplasm. It is found in the cytoskeleton. The protein resides in the microtubule organizing center. Its subcellular location is the centrosome. It localises to the centriole. The protein localises to the cilium basal body. It is found in the spindle pole. Plays an important role in centriole assembly and/or stability and ciliogenesis. Involved in early steps of centriole duplication, as well as in the later steps of centriole length control. Acts in concert with POC1B to ensure centriole integrity and proper mitotic spindle formation. This is POC1 centriolar protein homolog A (Poc1a) from Mus musculus (Mouse).